A 345-amino-acid polypeptide reads, in one-letter code: UPF0228 protein MA_2656 (345 aa).

It belongs to the UPF0228 family.

In Methanosarcina acetivorans (strain ATCC 35395 / DSM 2834 / JCM 12185 / C2A), this protein is UPF0228 protein MA_2656.